Reading from the N-terminus, the 49-residue chain is uncharacterized protein (49 aa).

A helical membrane pass occupies residues 20–42 (LFLVGLTIGKMATSRILSFLGFI).

It is found in the membrane. This is an uncharacterized protein from Dictyostelium discoideum (Social amoeba).